Consider the following 627-residue polypeptide: MALVSVAPMASRSCLHKSLSSSAHELKTICRTIPTLGMSRRGKSATPSMSMSLTTTVSDDGVQRRMGDFHSNLWNDDFIQSLSTSYGEPSYRERAERLIGEVKKMFNSMSSEDGELISPHNDLIQRVWMVDSVERLGIERHFKNEIKSALDYVYSYWSEKGIGCGRESVVADLNSTALGFRTLRLHGYAVSADVLNLFKDQNGQFACSPSQTEEEIRSVLNLYRASLIAFPGEKVMEEAEIFSAKYLEESLQKISVSSLSQEIRDVLEYGWHTYLPRMEARNHIDVFGQDTQNSKSCINTEKLLELAKLEFNIFHSLQKRELEYLVRWWKDSGSPQMTFCRHRHVEYYTLASCIAFEPQHSGFRLGFAKACHIITILDDMYDTFGTVDELELFTAAMKRWDPSAADCLPEYMKGVYLILYDTVNETSREAEKAQGRDTLDYARRAWDDYLDSYMQEAKWIATGYLPTFAEYYENGKVSSGHRTSALQPILTMDIPFPPHILKEVDFPSKLNDLASAILRLRGDTRCYKADRARGEEASSISCYMKDNPGATEEDALDHINAMISDVIRGLNWELLNPNSSVPISSKKHVFDISRAFHYGYKYRDGYSVANIETKSLVRRTVIDPVTL.

The N-terminal 36 residues, M1–L36, are a transit peptide targeting the chloroplast. Mg(2+)-binding residues include D378, D382, and D530. Positions D378–D382 match the DDXXD motif motif.

This sequence belongs to the terpene synthase family. Tpsd subfamily. The cofactor is Mg(2+). Mn(2+) is required as a cofactor.

It localises to the plastid. The protein resides in the chloroplast. It catalyses the reaction (2E)-geranyl diphosphate = (1S,5S)-alpha-pinene + diphosphate. It carries out the reaction (2E)-geranyl diphosphate = (1S,5S)-beta-pinene + diphosphate. Its pathway is terpene metabolism; oleoresin biosynthesis. In terms of biological role, involved in defensive oleoresin formation in conifers in response to insect attack or other injury. Involved in monoterpene (C10) olefins biosynthesis. A mixture of alpha- and beta-pinene (35:10) is produced by this enzyme. This chain is (-)-alpha-pinene synthase 2, chloroplastic, found in Picea sitchensis (Sitka spruce).